An 86-amino-acid polypeptide reads, in one-letter code: RQC P-site tRNA stabilizing factor (86 aa).

Residues Met-1–Glu-62 enclose the S4 RNA-binding domain.

The protein belongs to the RqcP family. As to quaternary structure, associates with stalled 50S ribosomal subunits. Binds to RqcH, 23S rRNA and the P-site tRNA. Does not require RqcH for association with 50S subunits. Crystallized 50S subunits are variously associated with an A/P-site tRNA with or without RqcH, as well as with P- and E-site tRNAs but no RqcH. Displaced from the 50S subunit by puromycin but not thiostrepton.

Key component of the ribosome quality control system (RQC), a ribosome-associated complex that mediates the extraction of incompletely synthesized nascent chains from stalled ribosomes and their subsequent degradation. RqcH recruits Ala-charged tRNA, and with RqcP directs the elongation of stalled nascent chains on 50S ribosomal subunits, leading to non-templated C-terminal alanine extensions (Ala tail). The Ala tail promotes nascent chain degradation. RqcP is associated with the translocation-like movement of the peptidyl-tRNA from the A-site into the P-site. RqcH, RqcP and charged tRNA(Ala) are necessary and sufficient to add an Ala tail to a model stalled nascent peptide; does not add Val. This Bacillus subtilis (strain 168) protein is RQC P-site tRNA stabilizing factor.